A 645-amino-acid chain; its full sequence is Chlorophyllide a oxygenase, chloroplastic (645 aa).

The disordered stretch occupies residues methionine 1–proline 46. The stretch at glutamine 105–glutamate 218 forms a coiled coil. A disordered region spans residues alanine 258–arginine 287. Residues threonine 259–glycine 271 are compositionally biased toward polar residues. In terms of domain architecture, Rieske spans tryptophan 305–valine 406. [2Fe-2S] cluster-binding residues include cysteine 346, histidine 348, cysteine 365, and histidine 368. Positions 446, 450, 453, and 458 each coordinate Fe cation.

It is found in the plastid. The protein localises to the chloroplast inner membrane. The protein resides in the chloroplast thylakoid membrane. The catalysed reaction is chlorophyllide a + 2 NADPH + 2 O2 + 2 H(+) = chlorophyllide b + 2 NADP(+) + 3 H2O. In terms of biological role, catalyzes a two-step oxygenase reaction involved in the synthesis of chlorophyll b. Acts specifically on the non-esterified chlorophyllide a and not on chlorophyll a. In Chlamydomonas reinhardtii (Chlamydomonas smithii), this protein is Chlorophyllide a oxygenase, chloroplastic (CAO).